A 450-amino-acid polypeptide reads, in one-letter code: Bifunctional protein GlmU (450 aa).

A pyrophosphorylase region spans residues 1-236 (MTAHKPFSAV…AWEVSGVNNR (236 aa)). UDP-N-acetyl-alpha-D-glucosamine contacts are provided by residues 12-15 (LAAG), Lys-26, Gln-79, 84-85 (GT), 107-109 (YGD), Gly-147, Glu-162, Asn-177, and Asn-234. Asp-109 serves as a coordination point for Mg(2+). Asn-234 contacts Mg(2+). Residues 237–257 (AELASLESLWQNRKRQDVMKD) are linker. Residues 258–450 (GASLIAPETV…KKFRQRKKKK (193 aa)) are N-acetyltransferase. Arg-323 and Lys-341 together coordinate UDP-N-acetyl-alpha-D-glucosamine. His-353 serves as the catalytic Proton acceptor. UDP-N-acetyl-alpha-D-glucosamine is bound by residues Tyr-356 and Asn-367. Residues 376-377 (NY), Ser-395, Ala-413, and Arg-430 contribute to the acetyl-CoA site.

The protein in the N-terminal section; belongs to the N-acetylglucosamine-1-phosphate uridyltransferase family. It in the C-terminal section; belongs to the transferase hexapeptide repeat family. Homotrimer. Mg(2+) serves as cofactor.

It localises to the cytoplasm. It carries out the reaction alpha-D-glucosamine 1-phosphate + acetyl-CoA = N-acetyl-alpha-D-glucosamine 1-phosphate + CoA + H(+). The catalysed reaction is N-acetyl-alpha-D-glucosamine 1-phosphate + UTP + H(+) = UDP-N-acetyl-alpha-D-glucosamine + diphosphate. It participates in nucleotide-sugar biosynthesis; UDP-N-acetyl-alpha-D-glucosamine biosynthesis; N-acetyl-alpha-D-glucosamine 1-phosphate from alpha-D-glucosamine 6-phosphate (route II): step 2/2. The protein operates within nucleotide-sugar biosynthesis; UDP-N-acetyl-alpha-D-glucosamine biosynthesis; UDP-N-acetyl-alpha-D-glucosamine from N-acetyl-alpha-D-glucosamine 1-phosphate: step 1/1. Its pathway is bacterial outer membrane biogenesis; LPS lipid A biosynthesis. In terms of biological role, catalyzes the last two sequential reactions in the de novo biosynthetic pathway for UDP-N-acetylglucosamine (UDP-GlcNAc). The C-terminal domain catalyzes the transfer of acetyl group from acetyl coenzyme A to glucosamine-1-phosphate (GlcN-1-P) to produce N-acetylglucosamine-1-phosphate (GlcNAc-1-P), which is converted into UDP-GlcNAc by the transfer of uridine 5-monophosphate (from uridine 5-triphosphate), a reaction catalyzed by the N-terminal domain. This is Bifunctional protein GlmU from Zymomonas mobilis subsp. mobilis (strain ATCC 31821 / ZM4 / CP4).